We begin with the raw amino-acid sequence, 337 residues long: MDPAVSPASTDPLDTHASGAGAAPIPVCPTPERYFYTSQCPDINHLRSLSILNRWLETELVFVGDEEDVSKLSEGELGFYRFLFAFLSAADDLVTENLGGLSGLFEQKDILHYYVEQECIEVVHSRVYNIIQLVLFHNNDQARRAYVARTINHPAIRVKVDWLEARVRECDSIPEKFILMILIEGVFFAASFAAIAYLRTNNLLRVTCQSNDLISRDEAVHTTASCYIYNNYLGGHAKPEAARVYRLFREAVDIEIGFIRSQAPTDSSILSPGALAAIENYVRFSADRLLGLIHMQPLYSAPAPDASFPLSLMSTDKHTNFFECRSTSYAGAVVNDL.

The segment at Met1 to Ala22 is disordered. Residues Asp91, Glu121, and His124 each contribute to the Fe cation site. Tyr128 is an active-site residue. Residues Phe177–Tyr197 traverse the membrane as a helical segment. 3 residues coordinate Fe cation: Glu184, Glu218, and His221.

The protein belongs to the ribonucleoside diphosphate reductase small chain family. As to quaternary structure, heterotetramer composed of a homodimer of the large subunit (R1) and a homodimer of the small subunit (R2). Larger multisubunit protein complex are also active, composed of (R1)n(R2)n. The cofactor is Fe cation.

It is found in the host membrane. It carries out the reaction a 2'-deoxyribonucleoside 5'-diphosphate + [thioredoxin]-disulfide + H2O = a ribonucleoside 5'-diphosphate + [thioredoxin]-dithiol. Ribonucleoside-diphosphate reductase holoenzyme provides the precursors necessary for viral DNA synthesis. Allows virus growth in non-dividing cells, as well as reactivation from latency in infected hosts. Catalyzes the biosynthesis of deoxyribonucleotides from the corresponding ribonucleotides. The polypeptide is Ribonucleoside-diphosphate reductase small subunit (Human herpesvirus 2 (strain 333) (HHV-2)).